The following is a 336-amino-acid chain: Putative cysteine synthase (336 aa).

Residue Lys-41 is modified to N6-(pyridoxal phosphate)lysine. Residues Asn-71, 179–183 (GTGGS), and Ser-269 contribute to the pyridoxal 5'-phosphate site.

Belongs to the cysteine synthase/cystathionine beta-synthase family. The cofactor is pyridoxal 5'-phosphate.

The catalysed reaction is O-acetyl-L-serine + hydrogen sulfide = L-cysteine + acetate. In terms of biological role, as it is highly similar to bacterial and plant cysteine synthases, it is possible that it catalyzes a related reaction. The polypeptide is Putative cysteine synthase (Sinorhizobium fredii (strain NBRC 101917 / NGR234)).